The chain runs to 245 residues: uncharacterized protein (245 aa).

A signal peptide spans Met-1–Ala-19.

The protein resides in the secreted. This is an uncharacterized protein from Arthroderma benhamiae (strain ATCC MYA-4681 / CBS 112371) (Trichophyton mentagrophytes).